The following is a 929-amino-acid chain: Protein translocase subunit SecA (929 aa).

ATP is bound by residues Gln83, 101–105 (GEGKT), and Asp491.

It belongs to the SecA family. Monomer and homodimer. Part of the essential Sec protein translocation apparatus which comprises SecA, SecYEG and auxiliary proteins SecDF. Other proteins may also be involved.

It is found in the cell inner membrane. Its subcellular location is the cellular thylakoid membrane. It localises to the cytoplasm. The catalysed reaction is ATP + H2O + cellular proteinSide 1 = ADP + phosphate + cellular proteinSide 2.. Part of the Sec protein translocase complex. Interacts with the SecYEG preprotein conducting channel. Has a central role in coupling the hydrolysis of ATP to the transfer of proteins into and across the cell membrane, serving as an ATP-driven molecular motor driving the stepwise translocation of polypeptide chains across the membrane. Its function is as follows. Probably participates in protein translocation into and across both the cytoplasmic and thylakoid membranes in cyanobacterial cells. The sequence is that of Protein translocase subunit SecA from Thermosynechococcus vestitus (strain NIES-2133 / IAM M-273 / BP-1).